Consider the following 430-residue polypeptide: MTGSLTCRRKGPLRGSIEVPGDKSISHRALLFGALSTGETRVRGLLDAEDVHATRRAVEALGATVRAEGEELVVVPPPALREPGDVVDCGNSGTSLRLLTGVLSGVPGLSILTGDASLRRRPVRRVIEPLRRMGADLSARDGDRLPPVVVRGRPLRGARHVLEVASAQVKSACLLAGLFAEGETTVVEPERSRDHTERMLAGMGVPVRVDGLEVTVAPARPRGGRVDVPGDISSAAFFLCAAAALPGSEVTVRNLGVNPTRTGLLDVLGAMGAALSRANEREVAGEPRADVTVRAAALHGTEIGGAIIPRLIDELPVVMVMATQARGRTVIRDAKELRVKESDRLASMGEALARAGAKIELFEDGCAIEGPTPLRGVAVQTRLDHRIAMSMAVAQLLAGGEEVVLDDVACVATSFPSFFALLDGLCEGGA.

Positions 23, 24, and 28 each coordinate 3-phosphoshikimate. Lysine 23 is a phosphoenolpyruvate binding site. Phosphoenolpyruvate contacts are provided by glycine 93 and arginine 121. Residues serine 166, glutamine 168, aspartate 313, and lysine 340 each contribute to the 3-phosphoshikimate site. Glutamine 168 is a binding site for phosphoenolpyruvate. The active-site Proton acceptor is aspartate 313. The phosphoenolpyruvate site is built by arginine 344 and arginine 386.

It belongs to the EPSP synthase family. As to quaternary structure, monomer.

The protein localises to the cytoplasm. It catalyses the reaction 3-phosphoshikimate + phosphoenolpyruvate = 5-O-(1-carboxyvinyl)-3-phosphoshikimate + phosphate. It participates in metabolic intermediate biosynthesis; chorismate biosynthesis; chorismate from D-erythrose 4-phosphate and phosphoenolpyruvate: step 6/7. Its function is as follows. Catalyzes the transfer of the enolpyruvyl moiety of phosphoenolpyruvate (PEP) to the 5-hydroxyl of shikimate-3-phosphate (S3P) to produce enolpyruvyl shikimate-3-phosphate and inorganic phosphate. This Anaeromyxobacter sp. (strain Fw109-5) protein is 3-phosphoshikimate 1-carboxyvinyltransferase.